A 136-amino-acid chain; its full sequence is Histone H3 (136 aa).

The segment at 1–43 is disordered; the sequence is MARTKQTARKNVGGKAPRKHIGQKSARKTASTTAGMKKPHRYR. Lys-10 is modified (N6-methylated lysine). 2 positions are modified to N6-acetyllysine: Lys-15 and Lys-24. The segment covering 16–27 has biased composition (basic residues); it reads APRKHIGQKSAR. An N6-methylated lysine mark is found at Lys-28 and Lys-37.

It belongs to the histone H3 family. The nucleosome is a histone octamer containing two molecules each of H2A, H2B, H3 and H4 assembled in one H3-H4 heterotetramer and two H2A-H2B heterodimers. The octamer wraps approximately 147 bp of DNA.

The protein localises to the nucleus. It is found in the chromosome. Functionally, core component of nucleosome. Nucleosomes wrap and compact DNA into chromatin, limiting DNA accessibility to the cellular machineries which require DNA as a template. Histones thereby play a central role in transcription regulation, DNA repair, DNA replication and chromosomal stability. DNA accessibility is regulated via a complex set of post-translational modifications of histones, also called histone code, and nucleosome remodeling. The chain is Histone H3 from Euplotes crassus.